A 459-amino-acid chain; its full sequence is Biphenyl dioxygenase subunit alpha (459 aa).

The Rieske domain occupies 58 to 156 (WLLLGHESHV…KEGDCGFDKA (99 aa)). [2Fe-2S] cluster-binding residues include Cys-100, His-102, Cys-120, and His-123. Fe cation-binding residues include His-233 and His-239.

This sequence belongs to the bacterial ring-hydroxylating dioxygenase alpha subunit family. As to quaternary structure, heterohexamer consisting of three BphA subunits and three BphE subunits. A ferredoxin (BphF) and a ferredoxin reductase (BphG) must be present to obtain activity. The cofactor is [2Fe-2S] cluster. It depends on Fe cation as a cofactor.

It carries out the reaction biphenyl + NADH + O2 + H(+) = (2R,3S)-3-phenylcyclohexa-3,5-diene-1,2-diol + NAD(+). Its pathway is xenobiotic degradation; biphenyl degradation; 2-hydroxy-2,4-pentadienoate and benzoate from biphenyl: step 1/4. The chain is Biphenyl dioxygenase subunit alpha (bphA) from Paraburkholderia xenovorans (strain LB400).